The following is a 282-amino-acid chain: Protoheme IX farnesyltransferase (282 aa).

9 consecutive transmembrane segments (helical) span residues 9–29, 39–59, 79–99, 102–122, 139–159, 165–185, 210–230, 231–251, and 261–281; these read LAKP…FLLA, LPLF…GCVF, LVTG…LLIL, LVLY…GFIV, VLGG…VVNI, LALF…IAML, IMLF…VLGS, ADLF…YKSI, and VFAK…CLTM.

Belongs to the UbiA prenyltransferase family. Protoheme IX farnesyltransferase subfamily.

The protein resides in the cell inner membrane. The catalysed reaction is heme b + (2E,6E)-farnesyl diphosphate + H2O = Fe(II)-heme o + diphosphate. It functions in the pathway porphyrin-containing compound metabolism; heme O biosynthesis; heme O from protoheme: step 1/1. Converts heme B (protoheme IX) to heme O by substitution of the vinyl group on carbon 2 of heme B porphyrin ring with a hydroxyethyl farnesyl side group. This chain is Protoheme IX farnesyltransferase, found in Francisella tularensis subsp. tularensis (strain FSC 198).